Reading from the N-terminus, the 88-residue chain is HssA/B-like protein 61 (88 aa).

This sequence belongs to the hssA/B family.

In Dictyostelium discoideum (Social amoeba), this protein is HssA/B-like protein 61 (hssl61).